Consider the following 231-residue polypeptide: MSACPCNIVILPVEILKNSSKDTKYSLYTTINRGYDVPRLKYGIIVSPRVHSLETLFSDLGFDKNIEKSSLYLLLNDPTLAYPNFHEHFEQLKGETNKDLSLPTYYIPKVQFLTEAFDSEHTLATIGYKPNNKESYEITGFTSMGNGYGIKLFNYSVIHMMRSHKCKRVVADIIMEHDLLGYYEKKLGFVEVQRFKVLKEQHQVKVFDDKVDFTKDFHVIKMIKELGNHRL.

It localises to the peroxisome. In terms of biological role, required for sporulation. Required for meiotic nuclear division. The sequence is that of Sporulation protein RMD6 (RMD6) from Saccharomyces cerevisiae (strain ATCC 204508 / S288c) (Baker's yeast).